The chain runs to 847 residues: UPF0182 protein CYB_0372 (847 aa).

7 helical membrane-spanning segments follow: residues 7-27 (GLFL…LAAF), 51-71 (WGLG…NICS), 76-96 (ATLA…AGSL), 141-161 (FNLV…ELGL), 168-188 (LALS…LFLI), 220-240 (LPAT…FWAL), and 259-279 (WASS…FGLL).

This sequence belongs to the UPF0182 family.

The protein resides in the cell membrane. The protein is UPF0182 protein CYB_0372 of Synechococcus sp. (strain JA-2-3B'a(2-13)) (Cyanobacteria bacterium Yellowstone B-Prime).